Here is a 514-residue protein sequence, read N- to C-terminus: Na(+)/H(+) antiporter NhaB (514 aa).

A run of 12 helical transmembrane segments spans residues 23–43 (LALL…PFIA), 52–72 (IFTL…LLAI), 97–117 (LLLM…LFIF), 120–140 (LLLS…AAAF), 144–164 (FLDA…FYGI), 202–222 (LMMH…VGEP), 238–258 (FFLR…LTCL), 303–323 (ALIG…VGLI), 353–373 (FTAL…QSLF), 391–411 (LFYL…VGTI), 447–467 (ATPN…APLI), and 475–495 (VWMA…CVEF).

Belongs to the NhaB Na(+)/H(+) (TC 2.A.34) antiporter family.

It localises to the cell inner membrane. It carries out the reaction 2 Na(+)(in) + 3 H(+)(out) = 2 Na(+)(out) + 3 H(+)(in). Its function is as follows. Na(+)/H(+) antiporter that extrudes sodium in exchange for external protons. The sequence is that of Na(+)/H(+) antiporter NhaB from Escherichia fergusonii (strain ATCC 35469 / DSM 13698 / CCUG 18766 / IAM 14443 / JCM 21226 / LMG 7866 / NBRC 102419 / NCTC 12128 / CDC 0568-73).